Consider the following 190-residue polypeptide: Threonylcarbamoyl-AMP synthase (190 aa).

In terms of domain architecture, YrdC-like spans 7-190 (GDAIAAAIDV…ALTGELFRQG (184 aa)).

Belongs to the SUA5 family. TsaC subfamily.

The protein resides in the cytoplasm. The enzyme catalyses L-threonine + hydrogencarbonate + ATP = L-threonylcarbamoyladenylate + diphosphate + H2O. In terms of biological role, required for the formation of a threonylcarbamoyl group on adenosine at position 37 (t(6)A37) in tRNAs that read codons beginning with adenine. Catalyzes the conversion of L-threonine, HCO(3)(-)/CO(2) and ATP to give threonylcarbamoyl-AMP (TC-AMP) as the acyladenylate intermediate, with the release of diphosphate. The sequence is that of Threonylcarbamoyl-AMP synthase from Shigella boydii serotype 4 (strain Sb227).